The sequence spans 198 residues: MAGPRPVVLSGPSGAGKSTLLKKLFQEHSSIFGFSVSHTTRNPRPGEEDGKDYYFVTREMMQRDIAAGDFIEHAEFSGNLYGTSKEAVRAVQAMNRICVLDVDLQGVRSIKKTDLCPIYIFVQPPSLDVLEQRLRLRNTETEESLAKRLAAARTDMESSKEPGLFDLVIINDDLDKAYATLKQALSEEIKKAQGTGHA.

Residues 4–186 enclose the Guanylate kinase-like domain; it reads PRPVVLSGPS…AYATLKQALS (183 aa). An ATP-binding site is contributed by 14–19; that stretch reads GAGKST. 37 to 51 contacts substrate; the sequence is SHTTRNPRPGEEDGK. Catalysis depends on residues R44, R137, and R148. 171 to 172 lines the ATP pocket; sequence ND.

It belongs to the guanylate kinase family. In terms of assembly, monomer. Interacts with RD3. Widely expressed. In retina is expressed in inner segment, outer nuclear layer, outer plexiform layer, inner plexiform layer, and ganglion cell layer (at protein level).

The protein resides in the photoreceptor inner segment. It localises to the cytoplasm. It is found in the cytosol. The protein localises to the mitochondrion. The enzyme catalyses GMP + ATP = GDP + ADP. In terms of biological role, catalyzes the phosphorylation of GMP to GDP. Essential enzyme for recycling GMP and indirectly, cyclic GMP (cGMP). Involved in the cGMP metabolism in photoreceptors. The protein is Guanylate kinase of Mus musculus (Mouse).